The primary structure comprises 253 residues: Phosphoglycerate mutase 2 (253 aa).

T3 is subject to Phosphothreonine. Substrate contacts are provided by residues 10 to 17 (RHGESSWN), 23 to 24 (CG), R62, 89 to 92 (ERHY), K100, and 116 to 117 (RR). Residue H11 is the Tele-phosphohistidine intermediate of the active site. Phosphoserine occurs at positions 14 and 15. The active-site Proton donor/acceptor is E89. S118 bears the Phosphoserine mark. T121 is modified (phosphothreonine). Residues Y132 and Y133 each carry the phosphotyrosine modification. Phosphoserine is present on S135. T152 is modified (phosphothreonine). 187–188 (GN) provides a ligand contact to substrate.

Belongs to the phosphoglycerate mutase family. BPG-dependent PGAM subfamily. Homodimer. Interacts with ENO1.

The enzyme catalyses (2R)-2-phosphoglycerate = (2R)-3-phosphoglycerate. It catalyses the reaction (2R)-3-phospho-glyceroyl phosphate = (2R)-2,3-bisphosphoglycerate + H(+). Functionally, interconversion of 3- and 2-phosphoglycerate with 2,3-bisphosphoglycerate as the primer of the reaction. Can also catalyze the reaction of EC 5.4.2.4 (synthase), but with a reduced activity. This chain is Phosphoglycerate mutase 2 (Pgam2), found in Rattus norvegicus (Rat).